A 290-amino-acid polypeptide reads, in one-letter code: Protein MGF 110-9L (290 aa).

The N-terminal stretch at Met1 to Ser19 is a signal peptide. The A repeat unit spans residues Met1–Ala160. Transmembrane regions (helical) follow at residues Val128 to Val148 and Leu163 to Asn183. The B repeat unit spans residues Thr161–Leu290.

This sequence belongs to the asfivirus MGF 110 family.

The protein localises to the membrane. This Ornithodoros (relapsing fever ticks) protein is Protein MGF 110-9L.